We begin with the raw amino-acid sequence, 167 residues long: I-Kappa-B like protein F2 (167 aa).

ANK repeat units follow at residues H54–G86, F91–I121, and L125–V154.

Belongs to the polydnaviridae I-Kappa-B-like protein family.

In terms of biological role, suppresses the host immune response through NF-kappa-B inactivation. Possesses ankyrin repeat domains required for NF-kappa-B binding but lacks the regulatory regions required for dissociation from NF-kappa-B and degradation. Therefore, prevents host NF-kappa-B release and subsequent activation. This Microplitis demolitor bracovirus (isolate Webb) (MdBV) protein is I-Kappa-B like protein F2 (F3).